Here is a 307-residue protein sequence, read N- to C-terminus: Recombination-associated protein RdgC (307 aa).

Belongs to the RdgC family.

The protein resides in the cytoplasm. The protein localises to the nucleoid. Functionally, may be involved in recombination. In Burkholderia orbicola (strain MC0-3), this protein is Recombination-associated protein RdgC.